The chain runs to 447 residues: Tektin-4 (447 aa).

Coiled-coil stretches lie at residues 114–143 (KSEL…RALD), 324–348 (KILS…DKEA), and 375–423 (FRLM…TNSL).

The protein belongs to the tektin family. As to quaternary structure, microtubule inner protein component of sperm flagellar doublet microtubules. Ubiquitinated, leading to its degradation. Deubiquitinated by USP16, promoting its stability.

It is found in the cytoplasm. Its subcellular location is the cytoskeleton. It localises to the cilium axoneme. The protein resides in the flagellum axoneme. Functionally, microtubule inner protein (MIP) part of the dynein-decorated doublet microtubules (DMTs) in cilia and flagellar axoneme. Forms filamentous polymers in the walls of ciliary and flagellar microtubules. Contributes to normal sperm motility. The sequence is that of Tektin-4 (Tekt4) from Rattus norvegicus (Rat).